The chain runs to 446 residues: Iroquois homeobox protein 5a (446 aa).

The segment at residues 117 to 173 (NATRDATATLKAWLNEHRKNPYPTKGEKIMLAIITKMTLTQVSTWFANARRRLKKEN) is a DNA-binding region (homeobox). The disordered stretch occupies residues 175-312 (MTWTPRNRSE…IHSPPSAPKP (138 aa)). Residues 184–201 (EDEEEDENIDLEKNDDDE) are compositionally biased toward acidic residues. 2 stretches are compositionally biased toward basic and acidic residues: residues 202–220 (PNKP…DHKL) and 227–258 (PCDR…RTDL). Composition is skewed to polar residues over residues 264 to 274 (KPTTSSPSVLQ) and 293 to 303 (STGNSNVTSVI).

The protein belongs to the TALE/IRO homeobox family.

Its subcellular location is the nucleus. Its function is as follows. Transcription factor. Binds to consensus iroquois binding site (IBS) motifs 5'-ACANNTGT-3' or 5'-ACANNNTGT-3' in regulatory elements of target genes. Required, together with irx7, for hyoid joint formation; they act cell autonomously to repress expression of cartilage matrix genes, such as collagen col2a1a, within immature chondrocytes of the joint interzone. May compete with or modify Sox9a activity, thereby reducing Sox9a-mediated activation of col2a1a. Probably acts in the developing hyoid joint downstream of Bmp signaling. In concert with irx6a, plays a role in visual performance. In Danio rerio (Zebrafish), this protein is Iroquois homeobox protein 5a (irx5a).